Reading from the N-terminus, the 76-residue chain is Exodeoxyribonuclease 7 small subunit (76 aa).

Belongs to the XseB family. As to quaternary structure, heterooligomer composed of large and small subunits.

The protein localises to the cytoplasm. It carries out the reaction Exonucleolytic cleavage in either 5'- to 3'- or 3'- to 5'-direction to yield nucleoside 5'-phosphates.. Functionally, bidirectionally degrades single-stranded DNA into large acid-insoluble oligonucleotides, which are then degraded further into small acid-soluble oligonucleotides. The chain is Exodeoxyribonuclease 7 small subunit from Staphylococcus aureus (strain MRSA252).